The following is a 281-amino-acid chain: Glutamate racemase (281 aa).

Substrate is bound by residues 13-14 (DS) and 45-46 (YG). Residue Cys76 is the Proton donor/acceptor of the active site. Residue 77–78 (NT) coordinates substrate. The Proton donor/acceptor role is filled by Cys185. 186–187 (TH) lines the substrate pocket.

It belongs to the aspartate/glutamate racemases family.

The enzyme catalyses L-glutamate = D-glutamate. The protein operates within cell wall biogenesis; peptidoglycan biosynthesis. Functionally, provides the (R)-glutamate required for cell wall biosynthesis. This is Glutamate racemase from Rippkaea orientalis (strain PCC 8801 / RF-1) (Cyanothece sp. (strain PCC 8801)).